Here is a 430-residue protein sequence, read N- to C-terminus: Enolase (430 aa).

Glutamine 165 contacts (2R)-2-phosphoglycerate. The active-site Proton donor is glutamate 207. 3 residues coordinate Mg(2+): aspartate 244, glutamate 287, and aspartate 314. (2R)-2-phosphoglycerate contacts are provided by lysine 339, arginine 368, serine 369, and lysine 390. Lysine 339 acts as the Proton acceptor in catalysis.

Belongs to the enolase family. As to quaternary structure, component of the RNA degradosome, a multiprotein complex involved in RNA processing and mRNA degradation. It depends on Mg(2+) as a cofactor.

It localises to the cytoplasm. It is found in the secreted. Its subcellular location is the cell surface. It catalyses the reaction (2R)-2-phosphoglycerate = phosphoenolpyruvate + H2O. The protein operates within carbohydrate degradation; glycolysis; pyruvate from D-glyceraldehyde 3-phosphate: step 4/5. Its function is as follows. Catalyzes the reversible conversion of 2-phosphoglycerate (2-PG) into phosphoenolpyruvate (PEP). It is essential for the degradation of carbohydrates via glycolysis. This is Enolase from Xylella fastidiosa (strain 9a5c).